A 288-amino-acid polypeptide reads, in one-letter code: Pyruvate synthase subunit PorB (288 aa).

3 residues coordinate [4Fe-4S] cluster: C16, C19, and C44. The segment covering S137–P148 has biased composition (polar residues). The tract at residues S137–P159 is disordered. The span at H149–P159 shows a compositional bias: basic and acidic residues. C208 provides a ligand contact to [4Fe-4S] cluster.

As to quaternary structure, heterotetramer of one alpha, one beta, one delta and one gamma chain. The cofactor is [4Fe-4S] cluster.

It carries out the reaction 2 oxidized [2Fe-2S]-[ferredoxin] + pyruvate + CoA = 2 reduced [2Fe-2S]-[ferredoxin] + acetyl-CoA + CO2 + H(+). The polypeptide is Pyruvate synthase subunit PorB (porB) (Methanothermobacter thermautotrophicus (strain ATCC 29096 / DSM 1053 / JCM 10044 / NBRC 100330 / Delta H) (Methanobacterium thermoautotrophicum)).